Reading from the N-terminus, the 372-residue chain is 4-hydroxy-3-methylbut-2-en-1-yl diphosphate synthase (flavodoxin) (372 aa).

Positions 270, 273, 305, and 312 each coordinate [4Fe-4S] cluster.

Belongs to the IspG family. Requires [4Fe-4S] cluster as cofactor.

It catalyses the reaction (2E)-4-hydroxy-3-methylbut-2-enyl diphosphate + oxidized [flavodoxin] + H2O + 2 H(+) = 2-C-methyl-D-erythritol 2,4-cyclic diphosphate + reduced [flavodoxin]. The protein operates within isoprenoid biosynthesis; isopentenyl diphosphate biosynthesis via DXP pathway; isopentenyl diphosphate from 1-deoxy-D-xylulose 5-phosphate: step 5/6. Converts 2C-methyl-D-erythritol 2,4-cyclodiphosphate (ME-2,4cPP) into 1-hydroxy-2-methyl-2-(E)-butenyl 4-diphosphate. In Escherichia coli (strain SMS-3-5 / SECEC), this protein is 4-hydroxy-3-methylbut-2-en-1-yl diphosphate synthase (flavodoxin).